A 555-amino-acid chain; its full sequence is Glutamine--tRNA ligase (555 aa).

A 'HIGH' region motif is present at residues 35-45 (PEPNGYLHIGH). ATP contacts are provided by residues 36-38 (EPN) and 42-48 (HIGHAKS). L-glutamine contacts are provided by aspartate 68 and tyrosine 213. ATP contacts are provided by residues threonine 232, 262–263 (RL), and 270–272 (MSK). Positions 269–273 (VMSKR) match the 'KMSKS' region motif.

This sequence belongs to the class-I aminoacyl-tRNA synthetase family. As to quaternary structure, monomer.

The protein localises to the cytoplasm. It catalyses the reaction tRNA(Gln) + L-glutamine + ATP = L-glutaminyl-tRNA(Gln) + AMP + diphosphate. The protein is Glutamine--tRNA ligase of Photobacterium profundum (strain SS9).